Here is a 313-residue protein sequence, read N- to C-terminus: Methionyl-tRNA formyltransferase (313 aa).

(6S)-5,6,7,8-tetrahydrofolate is bound at residue 113–116 (SLLP).

The protein belongs to the Fmt family.

It catalyses the reaction L-methionyl-tRNA(fMet) + (6R)-10-formyltetrahydrofolate = N-formyl-L-methionyl-tRNA(fMet) + (6S)-5,6,7,8-tetrahydrofolate + H(+). Its function is as follows. Attaches a formyl group to the free amino group of methionyl-tRNA(fMet). The formyl group appears to play a dual role in the initiator identity of N-formylmethionyl-tRNA by promoting its recognition by IF2 and preventing the misappropriation of this tRNA by the elongation apparatus. The protein is Methionyl-tRNA formyltransferase of Acidithiobacillus ferrooxidans (strain ATCC 23270 / DSM 14882 / CIP 104768 / NCIMB 8455) (Ferrobacillus ferrooxidans (strain ATCC 23270)).